Here is a 3038-residue protein sequence, read N- to C-terminus: Lovastatin nonaketide synthase, polyketide synthase component (3038 aa).

The Ketosynthase family 3 (KS3) domain occupies 8–447 (NEPIVVVGSG…GTNAHAIIEE (440 aa)). Residues cysteine 181, histidine 320, and histidine 367 each act as for beta-ketoacyl synthase activity in the active site. Residues 562 to 889 (IFTGQGAQWP…GKNDLDTFSR (328 aa)) are malonyl-CoA:ACP transacylase (MAT) domain. Serine 656 serves as the catalytic For malonyltransferase activity. The segment at 695–757 (AMLAAGMSFE…DESTFARLLR (63 aa)) is lovC-binding. An N-terminal hotdog fold region spans residues 953-1089 (HLLLGKLSEY…GQLALMIGDV (137 aa)). The tract at residues 953–1263 (HLLLGKLSEY…ENITFKPFSP (311 aa)) is dehydratase (DH) domain. Residues 953 to 1267 (HLLLGKLSEY…FKPFSPPDAS (315 aa)) form the PKS/mFAS DH domain. Histidine 985 (proton acceptor; for dehydratase activity) is an active-site residue. Positions 1107-1267 (EEHPHMNRVN…FKPFSPPDAS (161 aa)) are C-terminal hotdog fold. Aspartate 1174 acts as the Proton donor; for dehydratase activity in catalysis. The methyltransferase (CMet) domain stretch occupies residues 1443 to 1543 (LEIGAGTGGA…ARSLLKPGGQ (101 aa)). Residues 2139–2437 (TLPTRVRSID…KIPEYRGAKA (299 aa)) form a ketoreductase (KR) domain region. The Carrier domain maps to 2463–2538 (QIVIDGLSAK…DLADEAAARL (76 aa)). Serine 2498 carries the post-translational modification O-(pantetheine 4'-phosphoryl)serine. The interval 2546-2602 (VAATDGGAESTDNTSENEVSGREDTDLSAAATITEPSSADEDDTEPGDEDVPRSHHP) is disordered. The span at 2583-2594 (SADEDDTEPGDE) shows a compositional bias: acidic residues. Positions 2602–2952 (PLSLGQEYSW…PTSNQPAPLL (351 aa)) are inactive Condensation domain.

In terms of assembly, homodimer. Each MAT domain from the lovB homodimer binds one lovC molecule to form the final active lovB-lovC megasynthase complex. Pantetheine 4'-phosphate serves as cofactor.

It catalyses the reaction holo-[lovastatin nonaketide synthase] + 9 malonyl-CoA + S-adenosyl-L-methionine + 11 NADPH + 19 H(+) = dihydromonacolin L-[lovastatin nonaketide synthase] + S-adenosyl-L-homocysteine + 9 CO2 + 11 NADP(+) + 9 CoA + 6 H2O. It functions in the pathway polyketide biosynthesis; lovastatin biosynthesis. Lovastatin nonaketide synthase; part of the gene cluster that mediates the biosynthesis of lovastatin (also known as mevinolin, mevacor or monacolin K), a hypolipidemic inhibitor of (3S)-hydroxymethylglutaryl-coenzyme A (HMG-CoA) reductase (HMGR). The first step in the biosynthesis of lovastatin is the production of dihydromonacolin L acid by the lovastatin nonaketide synthase lovB and the trans-acting enoyl reductase lovC (called the lovB-lovC megasynthase complex) via condensation of one acetyl-CoA unit and 8 malonyl-CoA units. Dihydromonacolin L acid is released from lovB by the thioesterase lovG. Next, dihydromonacolin L acid is oxidized by the dihydromonacolin L monooxygenase lovA twice to form monacolin J acid. The 2-methylbutyrate moiety of lovastatin is synthesized by the lovastatin diketide synthase lovF via condensation of one acetyl-CoA unit and one malonyl-CoA unit. Finally, the covalent attachment of this moiety to monacolin J acid is catalyzed by the transesterase lovD to yield lovastatin. LovD has broad substrate specificity and can also convert monacolin J to simvastatin using alpha-dimethylbutanoyl-S-methyl-3-mercaptopropionate (DMB-S-MMP) as the thioester acyl donor, and can also catalyze the reverse reaction and function as hydrolase in vitro. LovD has much higher activity with LovF-bound 2-methylbutanoate than with free diketide substrates. This is Lovastatin nonaketide synthase, polyketide synthase component (lovB) from Aspergillus terreus (strain NIH 2624 / FGSC A1156).